Consider the following 500-residue polypeptide: Probable cytosol aminopeptidase (500 aa).

Mn(2+) is bound by residues Lys-274 and Asp-279. The active site involves Lys-286. Residues Asp-297, Asp-356, and Glu-358 each contribute to the Mn(2+) site. Arg-360 is a catalytic residue.

It belongs to the peptidase M17 family. It depends on Mn(2+) as a cofactor.

Its subcellular location is the cytoplasm. The catalysed reaction is Release of an N-terminal amino acid, Xaa-|-Yaa-, in which Xaa is preferably Leu, but may be other amino acids including Pro although not Arg or Lys, and Yaa may be Pro. Amino acid amides and methyl esters are also readily hydrolyzed, but rates on arylamides are exceedingly low.. It carries out the reaction Release of an N-terminal amino acid, preferentially leucine, but not glutamic or aspartic acids.. Presumably involved in the processing and regular turnover of intracellular proteins. Catalyzes the removal of unsubstituted N-terminal amino acids from various peptides. This is Probable cytosol aminopeptidase from Saccharophagus degradans (strain 2-40 / ATCC 43961 / DSM 17024).